Here is a 304-residue protein sequence, read N- to C-terminus: MKEHRHMTEKSPHSAFGDGAKAYDVPAFGLQIHTVEHGSGAPIVFLHGNPTSSYLWRHIFRRLHGHGRLLAVDLIGYGQSSKPDIEYTLENQQRYVDAWFDALDLRNVTLVLQDYGAAFGLNWASRNPDRVRAVAFFEPVLRNIDSVDLSPEFVTRRAKLRQPGEGEIFVQQENRFLTELFPWFFLTPLAPEDLRQYQTPFPTPHSRKAILAGPRNLPVDGEPASTVAFLEQAVNWLNTSDTPKLLLTFKPGFLLTDAILKWSQVTIRNLEIEAAGAGIHFVQEEQPETIARLLDAWLTRIAGN.

Residues Pro42–Val154 form the AB hydrolase-1 domain. Asp114 acts as the Nucleophile in catalysis. Residue Glu138 is the Proton donor of the active site. His280 (proton acceptor) is an active-site residue.

Belongs to the haloalkane dehalogenase family. Type 2 subfamily. In terms of assembly, monomer.

It catalyses the reaction 1-haloalkane + H2O = a halide anion + a primary alcohol + H(+). In terms of biological role, catalyzes hydrolytic cleavage of carbon-halogen bonds in halogenated aliphatic compounds, leading to the formation of the corresponding primary alcohols, halide ions and protons. This Agrobacterium fabrum (strain C58 / ATCC 33970) (Agrobacterium tumefaciens (strain C58)) protein is Haloalkane dehalogenase.